The chain runs to 432 residues: Glutamyl-tRNA reductase (432 aa).

Residues 49-52, Ser-101, 106-108, and Gln-112 contribute to the substrate site; these read TCNR and EPQ. The Nucleophile role is filled by Cys-50. 181–186 is an NADP(+) binding site; that stretch reads GAGETI. Residues 407–432 are disordered; the sequence is FPEKPGYQHPPIATPIVRTDDADPAP.

Belongs to the glutamyl-tRNA reductase family. As to quaternary structure, homodimer.

The catalysed reaction is (S)-4-amino-5-oxopentanoate + tRNA(Glu) + NADP(+) = L-glutamyl-tRNA(Glu) + NADPH + H(+). The protein operates within porphyrin-containing compound metabolism; protoporphyrin-IX biosynthesis; 5-aminolevulinate from L-glutamyl-tRNA(Glu): step 1/2. Catalyzes the NADPH-dependent reduction of glutamyl-tRNA(Glu) to glutamate 1-semialdehyde (GSA). This Xanthomonas oryzae pv. oryzae (strain PXO99A) protein is Glutamyl-tRNA reductase.